Consider the following 2248-residue polypeptide: MKDKRKKKDRTWAEAARLALEKHPNSPMTAKQILEVIQKEGLKETSGTSPLACLNAMLHTNTRIGDGTFFKIPGKSGLYALKKEESSCPADGTLDLVCESELDGTDMAEANAHGEENGVCSKQVTDEASSTRDSSLTNTAVQSKLVSSFQQHTKKALKQALRQQQKRRNGVSMMVNKTVPRVVLTPLKVSDEQSDSPSGSESKNGEADSSDKEMKHGQKSPTGKQTSQHLKRLKKSGLGHLKWTKAEDIDIETPGSILVNTNLRALINKHTFASLPQHFQQYLLLLLPEVDRQMGSDGILRLSTSALNNEFFAYAAQGWKQRLAEGEFTPEMQLRIRQEIEKEKKTEPWKEKFFERFYGEKLGMSREESVKLTTGPNNAGAQSSSSCGTSGLPVSAQTALAEQQPKSMKSPASPEPGFCATLCPMVEIPPKDIMAELESEDILIPEESVIQEEIAEEVETSICECQDENHKTIPEFSEEAESLTNSHEEPQIAPPEDNLESCVMMNDVLETLPHIEVKIEGKSESPQEEMTVVIDQLEVCDSLIPSTSSMTHVSDTEHKESETAVETSTPKIKTGSSSLEGQFPNEGIAIDMELQSDPEEQLSENACISETSFSSESPEGACTSLPSPGGETQSTSEESCTPASLETTFCSEVSSTENTDKYNQRNSTDENFHASLMSEISPISTSPEISEASLMSNLPLTSEASPVSNLPLTSETSPMSDLPLTSETSSVSSMLLTSETTFVSSLPLPSETSPISNSSINERMAHQQRKSPSVSEEPLSPQKDESSATAKPLGENLTSQQKNLSNTPEPIIMSSSSIAPEAFPSEDLHNKTLSQQTCKSHVDTEKPYPASIPELASTEMIKVKNHSVLQRTEKKVLPSPLELSVFSEGTDNKGNELPSAKLQDKQYISSVDKAPFSEGSRNKTHKQGSTQSRLETSHTSKSSEPSKSPDGIRNESRDSEISKRKTAEQHSFGICKEKRARIEDDQSTRNISSSSPPEKEQPPREEPRVPPLKIQLSKIGPPFIIKSQPVSKPESRASTSTSVSGGRNTGARTLADIKARAQQARAQREAAAAAAVAAAASIVSGAMGSPGEGGKTRTLAHIKEQTKAKLFAKHQARAHLFQTSKETRLPPPLSSKEGPPNLEVSSTPETKMEGSTGVIIVNPNCRSPSNKSAHLRETTTVLQQSLNPSKLPETATDLSVHSSDENIPVSHLSEKIVSSTSSENSSVPMLFNKNSVPVSVCSTAISGAIKEHPFVSSVDKSSVLMSVDSANTTISACNISMLKTIQGTDTPCIAIIPKCIESTPISATTEGSSISSSMDDKQLLISSSSASNLVSTQYTSVPTPSIGNNLPNLSTSSVLIPPMGINNRFPSEKIAIPGSEEQATVSMGTTVRAALSCSDSVAVTDSLVAHPTVAMFTGNMLTINSYDSPPKLSAESLDKNSGPRNRADNSGKPQQPPGGFAPAAINRSIPCKVIVDHSTTLTSSLSLTVSVESSEASLDLQGRPVRTEASVQPVACPQVSVISRPEPVANEGIDHSSTFIAASAAKQDSKTLPATCTSLRELPLVPDKLNEPTAPSHNFAEQARGPAPFKSEADTTCSNQYNPSNRICWNDDGMRSTGQPLVTHSGSSKQKEYLEQSCPKAIKTEHANYLNVSELHPRNLVTNVALPVKSELHEADKGFRMDTEDFPGPELPPPAAEGASSVQQTQNMKASTSSPMEEAISLATDALKRVPGAGSSGCRLSSVEANNPLVTQLLQGNLPLEKVLPQPRLGAKLEINRLPLPLQTTSVGKTAPERNVEIPPSSPNPDGKGYLAGTLAPLQMRKRENHPKKRVARTVGEHTQVKCEPGKLLVEPDVKGVPCVISSGISQLGHSQPFKQEWLNKHSMQNRIVHSPEVKQQKRLLPSCSFQQNLFHVDKNGGFHTDAGTSHRQQFYQMPVAARGPIPTAALLQASSKTPVGCNAFAFNRHLEQKGLGEVSLSSAPHQLRLANMLSPNMPMKEGDEVGGTAHTMPNKALVHPPPPPPPPPPPPLALPPPPPPPPPLPPPLPNAEVPSDQKQPPVTMETTKRLSWPQSTGICSNIKSEPLSFEEGLSSSCELGMKQVSYDQNEMKEQLKAFALKSADFSSYLLSEPQKPFTQLAAQKMQVQQQQQLCGNYPTIHFGSTSFKRAASAIEKSIGILGSGSNPATGLSGQNAQMPVQNFADSSNADELELKCSCRLKAMIVCKGCGAFCHDDCIGPSKLCVACLVVR.

The HTH HARE-type domain occupies 10–84; that stretch reads RTWAEAARLA…KSGLYALKKE (75 aa). The disordered stretch occupies residues 156–232; that stretch reads ALKQALRQQQ…GKQTSQHLKR (77 aa). The segment covering 203–216 has biased composition (basic and acidic residues); that stretch reads KNGEADSSDKEMKH. A compositionally biased stretch (polar residues) spans 219-228; that stretch reads KSPTGKQTSQ. Positions 254–363 constitute a DEUBAD domain; sequence PGSILVNTNL…FERFYGEKLG (110 aa). Disordered regions lie at residues 368 to 414, 547 to 583, 607 to 643, 703 to 726, 762 to 853, 869 to 1052, 1123 to 1152, 1183 to 1203, 1431 to 1462, 1573 to 1596, and 1990 to 2068; these read ESVK…PASP, TSSMTHVSDTEHKESETAVETSTPKIKTGSSSLEGQF, CISETSFSSESPEGACTSLPSPGGETQSTSEESCTPA, EASPVSNLPLTSETSPMSDLPLTS, ERMA…ASIP, LQRT…TGAR, TSKETRLPPPLSSKEGPPNLEVSSTPETKM, QQSLNPSKLPETATDLSVHSS, KLSAESLDKNSGPRNRADNSGKPQQPPGGFAP, TAPSHNFAEQARGPAPFKSEADTT, and LSPN…KRLS. Composition is skewed to polar residues over residues 371-389, 395-407, 564-580, 607-617, and 624-643; these read KLTTGPNNAGAQSSSSCGT, SAQTALAEQQPKS, AVETSTPKIKTGSSSLE, CISETSFSSES, and SLPSPGGETQSTSEESCTPA. The segment covering 796 to 818 has biased composition (polar residues); sequence NLTSQQKNLSNTPEPIIMSSSSI. Over residues 937–949 the composition is skewed to low complexity; the sequence is SHTSKSSEPSKSP. 3 stretches are compositionally biased toward basic and acidic residues: residues 950–968, 975–987, and 997–1008; these read DGIRNESRDSEISKRKTAE, CKEKRARIEDDQS, and PEKEQPPREEPR. The span at 1036–1046 shows a compositional bias: polar residues; the sequence is RASTSTSVSGG. Positions 2016 to 2046 are enriched in pro residues; it reads HPPPPPPPPPPPPLALPPPPPPPPPLPPPLP. The PHD-type; atypical zinc-finger motif lies at 2210-2247; sequence ELKCSCRLKAMIVCKGCGAFCHDDCIGPSKLCVACLVV.

It belongs to the Asx family. In terms of assembly, core component of the polycomb repressive deubiquitinase (PR-DUB) complex, at least composed of BAP1, one of ASXL1, ASXL2 or (probably) ASXL3, and one of MBD5 or MBD6. Distinct combinations of ASXL and MBD proteins may preferentially bind specific histone modification marks. The PR-DUB core associates with a number of accessory proteins, including FOXK1, FOXK2, KDM1B, HCFC1 and OGT; KDM1B specifically associates with ASXL2 PR-DUB complexes. Interacts (via PHD domain) with MBD5 and MBD6 (via MBD domain); the interaction is probably direct and mediates association of MBD proteins with the PR-DUB core. In terms of tissue distribution, expressed in pancreatic islets, testis, neuroblastoma, head and neck tumor.

The protein localises to the nucleus. Putative Polycomb group (PcG) protein. PcG proteins act by forming multiprotein complexes, which are required to maintain the transcriptionally repressive state of homeotic genes throughout development. PcG proteins are not required to initiate repression, but to maintain it during later stages of development. They probably act via methylation of histones, rendering chromatin heritably changed in its expressibility. Non-catalytic component of the PR-DUB complex, a complex that specifically mediates deubiquitination of histone H2A monoubiquitinated at 'Lys-119' (H2AK119ub1). The PR-DUB complex is an epigenetic regulator of gene expression and acts as a transcriptional coactivator, affecting genes involved in development, cell communication, signaling, cell proliferation and cell viability. ASXL1, ASXL2 and ASXL3 function redundantly in the PR-DUB complex and are essential for chromatin recruitment and transcriptional activation of associated genes. In Homo sapiens (Human), this protein is Putative Polycomb group protein ASXL3 (ASXL3).